The sequence spans 63 residues: MRFLLLLTVALLLTCIMETDAEAKPEDLAERFRERSDCSGMSDGTSCGDTGVCQNGLCMGAGS.

A signal peptide spans 1–21 (MRFLLLLTVALLLTCIMETDA). A propeptide spanning residues 22–34 (EAKPEDLAERFRE) is cleaved from the precursor.

Contains 2 disulfide bond. As to expression, expressed by the venom duct.

It is found in the secreted. This chain is Conotoxin Cl14.11, found in Californiconus californicus (California cone).